A 227-amino-acid polypeptide reads, in one-letter code: Phosphatidylserine decarboxylase proenzyme (227 aa).

The active-site Schiff-base intermediate with substrate; via pyruvic acid is the serine 169. Serine 169 bears the Pyruvic acid (Ser); by autocatalysis mark. Residues 197 to 227 (GRIPTPESGRSSSAEATAAPSASSARRSSAS) are disordered. The segment covering 206-227 (RSSSAEATAAPSASSARRSSAS) has biased composition (low complexity).

It belongs to the phosphatidylserine decarboxylase family. PSD-A subfamily. As to quaternary structure, heterodimer of a large membrane-associated beta subunit and a small pyruvoyl-containing alpha subunit. Requires pyruvate as cofactor. Post-translationally, is synthesized initially as an inactive proenzyme. Formation of the active enzyme involves a self-maturation process in which the active site pyruvoyl group is generated from an internal serine residue via an autocatalytic post-translational modification. Two non-identical subunits are generated from the proenzyme in this reaction, and the pyruvate is formed at the N-terminus of the alpha chain, which is derived from the carboxyl end of the proenzyme. The post-translation cleavage follows an unusual pathway, termed non-hydrolytic serinolysis, in which the side chain hydroxyl group of the serine supplies its oxygen atom to form the C-terminus of the beta chain, while the remainder of the serine residue undergoes an oxidative deamination to produce ammonia and the pyruvoyl prosthetic group on the alpha chain.

Its subcellular location is the cell membrane. It catalyses the reaction a 1,2-diacyl-sn-glycero-3-phospho-L-serine + H(+) = a 1,2-diacyl-sn-glycero-3-phosphoethanolamine + CO2. It participates in phospholipid metabolism; phosphatidylethanolamine biosynthesis; phosphatidylethanolamine from CDP-diacylglycerol: step 2/2. Catalyzes the formation of phosphatidylethanolamine (PtdEtn) from phosphatidylserine (PtdSer). The protein is Phosphatidylserine decarboxylase proenzyme of Salinibacter ruber (strain DSM 13855 / M31).